The following is a 731-amino-acid chain: Elongation factor 2 (731 aa).

The region spanning 19–234 (EYIRNIGICA…DIIDYCNEGK (216 aa)) is the tr-type G domain. GTP-binding positions include 28–35 (AHIDHGKT), 94–98 (DTPGH), and 148–151 (NKVD). His598 is modified (diphthamide).

The protein belongs to the TRAFAC class translation factor GTPase superfamily. Classic translation factor GTPase family. EF-G/EF-2 subfamily.

Its subcellular location is the cytoplasm. Its function is as follows. Catalyzes the GTP-dependent ribosomal translocation step during translation elongation. During this step, the ribosome changes from the pre-translocational (PRE) to the post-translocational (POST) state as the newly formed A-site-bound peptidyl-tRNA and P-site-bound deacylated tRNA move to the P and E sites, respectively. Catalyzes the coordinated movement of the two tRNA molecules, the mRNA and conformational changes in the ribosome. This chain is Elongation factor 2, found in Methanobrevibacter ruminantium (strain ATCC 35063 / DSM 1093 / JCM 13430 / OCM 146 / M1) (Methanobacterium ruminantium).